The primary structure comprises 530 residues: uncharacterized protein (530 aa).

This is an uncharacterized protein from Leptospira interrogans serogroup Icterohaemorrhagiae serovar Lai (strain 56601).